Here is a 149-residue protein sequence, read N- to C-terminus: Putative pre-16S rRNA nuclease (149 aa).

Belongs to the YqgF nuclease family.

The protein localises to the cytoplasm. In terms of biological role, could be a nuclease involved in processing of the 5'-end of pre-16S rRNA. This Synechococcus elongatus (strain ATCC 33912 / PCC 7942 / FACHB-805) (Anacystis nidulans R2) protein is Putative pre-16S rRNA nuclease.